Reading from the N-terminus, the 380-residue chain is Chaperone protein DnaJ (380 aa).

In terms of domain architecture, J spans 5–72 (DFYEVLGVAK…NKRAAYDQYG (68 aa)). The CR-type zinc-finger motif lies at 140–218 (GKDAQIRIPS…CGGQGKVKRQ (79 aa)). Zn(2+) contacts are provided by Cys-153, Cys-156, Cys-170, Cys-173, Cys-192, Cys-195, Cys-206, and Cys-209. CXXCXGXG motif repeat units lie at residues 153–160 (CDTCHGSG), 170–177 (CTTCNGMG), 192–199 (CPHCRGTG), and 206–213 (CTSCGGQG). The disordered stretch occupies residues 359-380 (KGGAKHSPSGESWTDRLKSFFS). Basic and acidic residues predominate over residues 371-380 (WTDRLKSFFS).

Belongs to the DnaJ family. Homodimer. Requires Zn(2+) as cofactor.

Its subcellular location is the cytoplasm. Participates actively in the response to hyperosmotic and heat shock by preventing the aggregation of stress-denatured proteins and by disaggregating proteins, also in an autonomous, DnaK-independent fashion. Unfolded proteins bind initially to DnaJ; upon interaction with the DnaJ-bound protein, DnaK hydrolyzes its bound ATP, resulting in the formation of a stable complex. GrpE releases ADP from DnaK; ATP binding to DnaK triggers the release of the substrate protein, thus completing the reaction cycle. Several rounds of ATP-dependent interactions between DnaJ, DnaK and GrpE are required for fully efficient folding. Also involved, together with DnaK and GrpE, in the DNA replication of plasmids through activation of initiation proteins. In Delftia acidovorans (strain DSM 14801 / SPH-1), this protein is Chaperone protein DnaJ.